We begin with the raw amino-acid sequence, 782 residues long: Polyribonucleotide nucleotidyltransferase (782 aa).

Positions 514 and 520 each coordinate Mg(2+). Residues 580–639 (PRIITIKIPVDQIGAVIGPKGKIINQIQDDTGAEITIEDDGTIYIGATEGTAAEAARAAI) enclose the KH domain. One can recognise an S1 motif domain in the interval 651 to 723 (GERYLGTVVK…ARGKLSLVPV (73 aa)). The span at 734–753 (AGAGESAASGGAPRSAGGPQ) shows a compositional bias: low complexity. Residues 734–782 (AGAGESAASGGAPRSAGGPQPREHQGPGRPRGRGGDHGGEGRQRTRRRH) are disordered. The span at 766–776 (RGGDHGGEGRQ) shows a compositional bias: basic and acidic residues.

The protein belongs to the polyribonucleotide nucleotidyltransferase family. The cofactor is Mg(2+).

It localises to the cytoplasm. It carries out the reaction RNA(n+1) + phosphate = RNA(n) + a ribonucleoside 5'-diphosphate. In terms of biological role, involved in mRNA degradation. Catalyzes the phosphorolysis of single-stranded polyribonucleotides processively in the 3'- to 5'-direction. The polypeptide is Polyribonucleotide nucleotidyltransferase (Acidothermus cellulolyticus (strain ATCC 43068 / DSM 8971 / 11B)).